A 154-amino-acid chain; its full sequence is tRNA (cytidine(34)-2'-O)-methyltransferase (154 aa).

4 residues coordinate S-adenosyl-L-methionine: Leu-78, Gly-100, Ile-122, and Ser-130.

Belongs to the class IV-like SAM-binding methyltransferase superfamily. RNA methyltransferase TrmH family. TrmL subfamily. Homodimer.

The protein localises to the cytoplasm. It catalyses the reaction cytidine(34) in tRNA + S-adenosyl-L-methionine = 2'-O-methylcytidine(34) in tRNA + S-adenosyl-L-homocysteine + H(+). The enzyme catalyses 5-carboxymethylaminomethyluridine(34) in tRNA(Leu) + S-adenosyl-L-methionine = 5-carboxymethylaminomethyl-2'-O-methyluridine(34) in tRNA(Leu) + S-adenosyl-L-homocysteine + H(+). Its function is as follows. Methylates the ribose at the nucleotide 34 wobble position in the two leucyl isoacceptors tRNA(Leu)(CmAA) and tRNA(Leu)(cmnm5UmAA). Catalyzes the methyl transfer from S-adenosyl-L-methionine to the 2'-OH of the wobble nucleotide. The sequence is that of tRNA (cytidine(34)-2'-O)-methyltransferase from Saccharophagus degradans (strain 2-40 / ATCC 43961 / DSM 17024).